A 698-amino-acid polypeptide reads, in one-letter code: Quillaic acid 3-O-glycosyltransferase CSL1 (698 aa).

The chain crosses the membrane as a helical span at residues 14-34 (ALLSRLHILFHSALVASVFYY). N-linked (GlcNAc...) asparagine glycosylation occurs at Asn-38. Residues 42-62 (GPAWALMTFAELTLAFIWALT) traverse the membrane as a helical segment. UDP-alpha-D-glucose contacts are provided by Lys-99 and Glu-100. Residue Asp-129 is part of the active site. Residue Asn-317 is glycosylated (N-linked (GlcNAc...) asparagine). Ser-436 is a catalytic residue. Helical transmembrane passes span 478 to 498 (WTSG…YAMS), 508 to 528 (YAYF…GVVL), 546 to 566 (WLLA…YEVL), 581 to 601 (IWII…MLNK), 636 to 656 (MFMV…FGGL), and 669 to 689 (FAQL…MEEI).

This sequence belongs to the glycosyltransferase 2 family. Plant cellulose synthase-like G subfamily. As to expression, mainly expressed in flowers and flower buds and, to a lesser extent, in leaves, stems and roots.

It localises to the golgi apparatus membrane. It participates in secondary metabolite biosynthesis; terpenoid biosynthesis. Component of the oleanane-type triterpene saponins (e.g. saponarioside A and saponarioside B) biosynthetic pathway, leading to the production of natural products with detergent properties used as traditional sources of soap. Glycosyltransferase that mediates the conversion of quillaic acid (QA) to QA-mono via the initiation of the C-3 sugar chain. The chain is Quillaic acid 3-O-glycosyltransferase CSL1 from Saponaria officinalis (Common soapwort).